The primary structure comprises 409 residues: Major capsid protein (409 aa).

This sequence belongs to the lambda phage major capsid protein family. Homomultimer. Interacts with the portal protein. Interacts with the decoration protein.

The protein localises to the virion. It localises to the host cytoplasm. Its function is as follows. Assembles to form an icosahedric capsid shell with a T=7 symmetry although with a diameter of about 82 nm, which is a larger volume than the usual T=7 capsids. A dramatic reconfiguration of the capsid shell that expands the procaspid from a diameter of 66 nm to a supersized capsid of 82 nm, allows packaging of the large viral DNA genome. The capsid decoration protein binds the expanded capsid and stabilizes it. This chain is Major capsid protein, found in Thermus virus P23-45 (Thermus thermophilus phage P23-45).